A 122-amino-acid polypeptide reads, in one-letter code: Large ribosomal subunit protein uL14 (122 aa).

It belongs to the universal ribosomal protein uL14 family. In terms of assembly, part of the 50S ribosomal subunit. Forms a cluster with proteins L3 and L19. In the 70S ribosome, L14 and L19 interact and together make contacts with the 16S rRNA in bridges B5 and B8.

In terms of biological role, binds to 23S rRNA. Forms part of two intersubunit bridges in the 70S ribosome. This is Large ribosomal subunit protein uL14 from Brevibacillus brevis (strain 47 / JCM 6285 / NBRC 100599).